Consider the following 276-residue polypeptide: Anamorsin homolog (276 aa).

Residues Met-1–Trp-152 are N-terminal SAM-like domain. Residues Trp-152–Val-189 are linker. Positions 195, 211, 214, and 216 each coordinate [2Fe-2S] cluster. The segment at Cys-195–Cys-216 is fe-S binding site A. Cys-237, Cys-240, Cys-248, and Cys-251 together coordinate [4Fe-4S] cluster. Short sequence motifs (cx2C motif) lie at residues Cys-237–Cys-240 and Cys-248–Cys-251. The fe-S binding site B stretch occupies residues Cys-237–Cys-251.

It belongs to the anamorsin family. As to quaternary structure, monomer. [2Fe-2S] cluster is required as a cofactor. It depends on [4Fe-4S] cluster as a cofactor.

It localises to the cytoplasm. It is found in the mitochondrion intermembrane space. Its function is as follows. Component of the cytosolic iron-sulfur (Fe-S) protein assembly (CIA) machinery. Required for the maturation of extramitochondrial Fe-S proteins. Part of an electron transfer chain functioning in an early step of cytosolic Fe-S biogenesis, facilitating the de novo assembly of a [4Fe-4S] cluster on the cytosolic Fe-S scaffold complex. Electrons are transferred from NADPH via a FAD- and FMN-containing diflavin oxidoreductase. Together with the diflavin oxidoreductase, also required for the assembly of the diferric tyrosyl radical cofactor of ribonucleotide reductase (RNR), probably by providing electrons for reduction during radical cofactor maturation in the catalytic small subunit. The protein is Anamorsin homolog of Schistosoma japonicum (Blood fluke).